Reading from the N-terminus, the 376-residue chain is 3-dehydroquinate synthase (376 aa).

Residues 115–119, 139–140, K152, and K161 each bind NAD(+); these read GVIGD and TS. Positions 194, 256, and 275 each coordinate Zn(2+).

The protein belongs to the sugar phosphate cyclases superfamily. Dehydroquinate synthase family. Co(2+) is required as a cofactor. Requires Zn(2+) as cofactor. NAD(+) serves as cofactor.

The protein localises to the cytoplasm. It carries out the reaction 7-phospho-2-dehydro-3-deoxy-D-arabino-heptonate = 3-dehydroquinate + phosphate. The protein operates within metabolic intermediate biosynthesis; chorismate biosynthesis; chorismate from D-erythrose 4-phosphate and phosphoenolpyruvate: step 2/7. Catalyzes the conversion of 3-deoxy-D-arabino-heptulosonate 7-phosphate (DAHP) to dehydroquinate (DHQ). This chain is 3-dehydroquinate synthase, found in Rhizobium etli (strain CIAT 652).